The primary structure comprises 429 residues: Protein AST1 (429 aa).

Interacts with PMA1.

It is found in the cell membrane. Its subcellular location is the membrane raft. It localises to the golgi apparatus membrane. The protein localises to the late endosome membrane. In terms of biological role, lipid raft-associated protein involved in the targeting of PMA1 from Golgi to the plasma membrane. May induce clustering of PMA1, which facilitates partition of PMA1 into lipid rafts after leaving the ER and its transport to the cell surface. This chain is Protein AST1, found in Saccharomyces cerevisiae (strain ATCC 204508 / S288c) (Baker's yeast).